We begin with the raw amino-acid sequence, 400 residues long: Lysophospholipid transporter LplT (400 aa).

12 consecutive transmembrane segments (helical) span residues 19–39 (VIVAQFLSAFGDNALLFATLA), 53–73 (VLQMVFVGAYILFAPFVGQIA), 91–111 (AGAAGICLGINPFVGYTLVGI), 139–159 (LMEASTIAAILLGSVAGGVLA), 164–184 (IAALVACALAYAGAVAANLFI), 195–213 (SWRLSAMTRSFFSACVVLW), 227–247 (LFWGAGVTLRFLLVLWVPVAL), 257–277 (YLNAMVAVGIVVGAGAAAKLV), 281–301 (TVSRCMPAGILIGVVVAIFSL), 304–324 (ALLPAYALLLLIGMLGGFFVV), 352–372 (NSAMLLMLGLYSLAVLVGVPA), and 373–393 (VAIGIGFGVLFALAIAALWIW).

It belongs to the major facilitator superfamily. LplT (TC 2.A.1.42) family.

The protein resides in the cell inner membrane. In terms of biological role, catalyzes the facilitated diffusion of 2-acyl-glycero-3-phosphoethanolamine (2-acyl-GPE) into the cell. The chain is Lysophospholipid transporter LplT from Salmonella newport (strain SL254).